A 373-amino-acid polypeptide reads, in one-letter code: Chaperone protein DnaJ (373 aa).

Residues 4–68 (NYYQILGVSK…QTRAAYDRLG (65 aa)) form the J domain. The segment at 136-214 (GIEKNISFSS…CHGMGRYHKQ (79 aa)) adopts a CR-type zinc-finger fold. Residues cysteine 149, cysteine 152, cysteine 166, cysteine 169, cysteine 188, cysteine 191, cysteine 202, and cysteine 205 each coordinate Zn(2+). CXXCXGXG motif repeat units lie at residues 149-156 (CDTCHGSG), 166-173 (CDACSGVG), 188-195 (CHKCQGNG), and 202-209 (CKKCHGMG).

This sequence belongs to the DnaJ family. Homodimer. Zn(2+) is required as a cofactor.

Its subcellular location is the cytoplasm. Functionally, participates actively in the response to hyperosmotic and heat shock by preventing the aggregation of stress-denatured proteins and by disaggregating proteins, also in an autonomous, DnaK-independent fashion. Unfolded proteins bind initially to DnaJ; upon interaction with the DnaJ-bound protein, DnaK hydrolyzes its bound ATP, resulting in the formation of a stable complex. GrpE releases ADP from DnaK; ATP binding to DnaK triggers the release of the substrate protein, thus completing the reaction cycle. Several rounds of ATP-dependent interactions between DnaJ, DnaK and GrpE are required for fully efficient folding. Also involved, together with DnaK and GrpE, in the DNA replication of plasmids through activation of initiation proteins. The polypeptide is Chaperone protein DnaJ (Rickettsia peacockii (strain Rustic)).